The chain runs to 457 residues: tRNA-2-methylthio-N(6)-dimethylallyladenosine synthase (457 aa).

One can recognise an MTTase N-terminal domain in the interval Lys-3–Glu-120. [4Fe-4S] cluster is bound by residues Cys-12, Cys-49, Cys-83, Cys-157, Cys-161, and Cys-164. Positions Arg-143–Arg-377 constitute a Radical SAM core domain. The TRAM domain occupies Gln-380–Leu-447.

It belongs to the methylthiotransferase family. MiaB subfamily. In terms of assembly, monomer. Requires [4Fe-4S] cluster as cofactor.

Its subcellular location is the cytoplasm. The enzyme catalyses N(6)-dimethylallyladenosine(37) in tRNA + (sulfur carrier)-SH + AH2 + 2 S-adenosyl-L-methionine = 2-methylsulfanyl-N(6)-dimethylallyladenosine(37) in tRNA + (sulfur carrier)-H + 5'-deoxyadenosine + L-methionine + A + S-adenosyl-L-homocysteine + 2 H(+). Its function is as follows. Catalyzes the methylthiolation of N6-(dimethylallyl)adenosine (i(6)A), leading to the formation of 2-methylthio-N6-(dimethylallyl)adenosine (ms(2)i(6)A) at position 37 in tRNAs that read codons beginning with uridine. The protein is tRNA-2-methylthio-N(6)-dimethylallyladenosine synthase of Burkholderia thailandensis (strain ATCC 700388 / DSM 13276 / CCUG 48851 / CIP 106301 / E264).